A 366-amino-acid chain; its full sequence is Sodium-potassium/proton antiporter ChaA (366 aa).

Residues 1 to 16 (MSNAQEAVKTRHKETS) lie on the Cytoplasmic side of the membrane. 2 consecutive transmembrane segments (helical) span residues 17-37 (LIFPVLALVVLFLWGSSQTLP) and 38-58 (VVIAINLLALIGILSSAFSVV). Over 59–74 (RHADVLAHRLGEPYGS) the chain is Cytoplasmic. A helical transmembrane segment spans residues 75–95 (LILSLSVVILEVSLISALMAT). Residues 96–106 (GDAAPTLMRDT) are Periplasmic-facing. Residues 107–127 (LYSIIMIVTGGLVGFSLLLGG) form a helical membrane-spanning segment. Residues 128–143 (RKFATQYMNLFGIKQY) are Cytoplasmic-facing. The helical transmembrane segment at 144 to 164 (LIALFPLAIIVLVFPMALPAA) threads the bilayer. Over 165-167 (NFS) the chain is Periplasmic. A helical transmembrane segment spans residues 168-188 (TGQALLVALISAAMYGVFLLI). Residues 189-216 (QTKTHQSLFVYEHEDDSDDDDPHHGKPS) are Cytoplasmic-facing. Residues 217–237 (AHSSLWHAIWLIIHLIAVIAV) traverse the membrane as a helical segment. Residues 238-255 (TKMNASSLETLLDSMNAP) lie on the Periplasmic side of the membrane. The chain crosses the membrane as a helical span at residues 256–276 (VAFTGFLVALLILSPEGLGAL). Over 277–290 (KAVLNNQVQRAMNL) the chain is Cytoplasmic. Residues 291–311 (FFGSVLATISLTVPVVTLIAF) form a helical membrane-spanning segment. The Periplasmic segment spans residues 312–318 (MTGNELQ). Residues 319–339 (FALGAPEMVVMVASLVLCHIS) traverse the membrane as a helical segment. Residues 340–345 (FSTGRT) lie on the Cytoplasmic side of the membrane. The helical transmembrane segment at 346 to 366 (NVLNGAAHLALFAAYLMTIFA) threads the bilayer.

Belongs to the Ca(2+):cation antiporter (CaCA) (TC 2.A.19) family.

The protein resides in the cell inner membrane. The enzyme catalyses Na(+)(in) + H(+)(out) = Na(+)(out) + H(+)(in). It carries out the reaction K(+)(in) + H(+)(out) = K(+)(out) + H(+)(in). It catalyses the reaction Ca(2+)(in) + H(+)(out) = Ca(2+)(out) + H(+)(in). Pronounced pH dependence with sodium as substrate. Ca(2+)/H(+) and Na(+)/H(+) antiporter activities are both inhibited by magnesium. Ca(2+)/H(+) activity is inhibited by the proton ionophore carbonyl cyanide m-chlorophenylhydrazone (CCCP). Sodium exporter that functions mainly at alkaline pH. Can also function as a potassium/proton and calcium/proton antiporter at alkaline pH. Does not play a major role in calcium export. The K(+)/H(+) antiporter activity may enable E.coli to adapt to K(+) salinity stress and to maintain K(+) homeostasis. In Escherichia coli (strain K12), this protein is Sodium-potassium/proton antiporter ChaA.